A 755-amino-acid polypeptide reads, in one-letter code: Polycomb protein SUZ12 (755 aa).

Disordered stretches follow at residues 26 to 79 (KMGN…RRIS), 333 to 377 (NANG…SRRA), and 392 to 420 (AVGR…SDDR). The span at 30–42 (KASSQAQKRSQSQ) shows a compositional bias: low complexity. Composition is skewed to polar residues over residues 43–57 (TGDS…DGSG) and 349–359 (TQPNGTHNEGT). Residues 411–420 (GEDHPPSDDR) show a composition bias toward basic and acidic residues. The C2H2-type zinc finger occupies 436–458 (FACLICGAENERLSQLRAHYMCH). The polycomb protein VEFS-Box stretch occupies residues 580 to 645 (IDDSWLLLKH…KADWLVSKRS (66 aa)).

Belongs to the VEFS (VRN2-EMF2-FIS2-SU(Z)12) family. Component of the polycomb repressive complex 2 (PRC2) that consists of four core subunits icluding EZH2, EED, SUZ12, and RBBP4, among which EZH2 is the catalytic subunit and which minimally requires EED and SUZ12 for catalysis.

The protein localises to the nucleus. Functionally, component of the of the Polycomb Repressive Complex 2 (PRC2), a histone H3 lysine methyltransferase responsible for generating mono-, di-, and tri-methylation on Lys27 (H3K27me1, H3K27me2 and H3K27me3). The tri-methylated form is known to be critical in gene repression, and its proper placement is essential in defining repression patterns during development. SUZ12 is not a catalytic subunit but is required for the complex regulation of histone H3 lysine methylation by EZH2. The sequence is that of Polycomb protein SUZ12 from Chaetomium thermophilum (strain DSM 1495 / CBS 144.50 / IMI 039719) (Thermochaetoides thermophila).